A 211-amino-acid polypeptide reads, in one-letter code: Redox-sensing transcriptional repressor Rex (211 aa).

The H-T-H motif DNA-binding region spans 17–56 (LYYRFIQNFAQEGMERISSKELSEAMKIDSATIRRDFSYF). Position 91–96 (91–96 (GVGNLG)) interacts with NAD(+).

The protein belongs to the transcriptional regulatory Rex family. In terms of assembly, homodimer.

It localises to the cytoplasm. In terms of biological role, modulates transcription in response to changes in cellular NADH/NAD(+) redox state. This is Redox-sensing transcriptional repressor Rex from Lysinibacillus sphaericus (strain C3-41).